Reading from the N-terminus, the 312-residue chain is Phosphoribosylaminoimidazole-succinocarboxamide synthase (312 aa).

The protein belongs to the SAICAR synthetase family.

The enzyme catalyses 5-amino-1-(5-phospho-D-ribosyl)imidazole-4-carboxylate + L-aspartate + ATP = (2S)-2-[5-amino-1-(5-phospho-beta-D-ribosyl)imidazole-4-carboxamido]succinate + ADP + phosphate + 2 H(+). It functions in the pathway purine metabolism; IMP biosynthesis via de novo pathway; 5-amino-1-(5-phospho-D-ribosyl)imidazole-4-carboxamide from 5-amino-1-(5-phospho-D-ribosyl)imidazole-4-carboxylate: step 1/2. The sequence is that of Phosphoribosylaminoimidazole-succinocarboxamide synthase from Legionella pneumophila (strain Paris).